We begin with the raw amino-acid sequence, 106 residues long: Cell cycle protein GpsB (106 aa).

The stretch at 34–67 forms a coiled coil; that stretch reads LDVIIQDYDNFKQEIDRLKAENEKLKKSTPAVEQ. Residues 55–83 form a disordered region; that stretch reads NEKLKKSTPAVEQSRSRSQQPPTSQVNYD. Residues 70–79 are compositionally biased toward low complexity; the sequence is SRSQQPPTSQ.

It belongs to the GpsB family. Forms polymers through the coiled coil domains. Interacts with PBP1, MreC and EzrA.

It localises to the cytoplasm. In terms of biological role, divisome component that associates with the complex late in its assembly, after the Z-ring is formed, and is dependent on DivIC and PBP2B for its recruitment to the divisome. Together with EzrA, is a key component of the system that regulates PBP1 localization during cell cycle progression. Its main role could be the removal of PBP1 from the cell pole after pole maturation is completed. Also contributes to the recruitment of PBP1 to the division complex. Not essential for septum formation. In Oceanobacillus iheyensis (strain DSM 14371 / CIP 107618 / JCM 11309 / KCTC 3954 / HTE831), this protein is Cell cycle protein GpsB.